The sequence spans 77 residues: PTS system N-acetylglucosamine-specific EIIB component (77 aa).

The region spanning alanine 2–methionine 77 is the PTS EIIB type-1 domain. The active-site Phosphocysteine intermediate; for EIIB activity is cysteine 24.

The enzyme catalyses N(pros)-phospho-L-histidyl-[protein] + N-acetyl-D-glucosamine(out) = N-acetyl-D-glucosamine 6-phosphate(in) + L-histidyl-[protein]. In terms of biological role, the phosphoenolpyruvate-dependent sugar phosphotransferase system (sugar PTS), a major carbohydrate active transport system, catalyzes the phosphorylation of incoming sugar substrates concomitantly with their translocation across the cell membrane. This system is involved in N-acetylglucosamine (GlcNAc) transport. The chain is PTS system N-acetylglucosamine-specific EIIB component from Streptomyces coelicolor (strain ATCC BAA-471 / A3(2) / M145).